Here is a 440-residue protein sequence, read N- to C-terminus: GTPase Der (440 aa).

EngA-type G domains lie at 4–168 and 177–352; these read PVVA…PPEK and IKIA…GRHS. Residues 10 to 17, 57 to 61, 120 to 123, 183 to 190, 230 to 234, and 295 to 298 contribute to the GTP site; these read GRPNVGKS, DTGGL, NKVE, DTAGM, and NKWD. In terms of domain architecture, KH-like spans 353 to 437; the sequence is MRISTPGLNA…PIRFVLRKKT (85 aa).

This sequence belongs to the TRAFAC class TrmE-Era-EngA-EngB-Septin-like GTPase superfamily. EngA (Der) GTPase family. Associates with the 50S ribosomal subunit.

Its function is as follows. GTPase that plays an essential role in the late steps of ribosome biogenesis. The protein is GTPase Der of Pelotomaculum thermopropionicum (strain DSM 13744 / JCM 10971 / SI).